The sequence spans 493 residues: Tripartite motif-containing protein 5 (493 aa).

Ala-2 carries the post-translational modification N-acetylalanine. An RING-type zinc finger spans residues 15–59; that stretch reads CPICLELLTQPLSLDCGHSFCQACLTANHEKSMLDKGESSCPVCR. Ser-86 carries the phosphoserine modification. Residues 90 to 132 form a B box-type zinc finger; the sequence is QKVDHCARHGEKLLLFCQEDGKVICWLCERSQEHRGHHTFLTE. Positions 95, 98, 117, and 123 each coordinate Zn(2+). Residues 131-240 are a coiled coil; sequence TEEVAQECQV…LISDLEHRLQ (110 aa). The tract at residues 185–198 is required for interaction with GABARAP and for autophagy; that stretch reads FEQLRDILDWEESN. The B30.2/SPRY domain maps to 281 to 493; that stretch reads LKGMLEVFRE…VPMTLCSPSS (213 aa).

The protein belongs to the TRIM/RBCC family. As to quaternary structure, can form homodimers and homotrimers. In addition to lower-order dimerization, also exhibits a higher-order multimerization and both low- and high-order multimerizations are essential for its restriction activity. Interacts with BTBD1 and BTBD2. Interacts with PSMC4, PSMC5, PSMD7 and HSPA8/HSC70. Interacts (via B30.2/SPRY domain) with HSPA1A/B. Interacts with PSMC2, MAP3K7/TAK1, TAB2 and TAB3. Interacts with SQSTM1. Interacts with TRIM6 and TRIM34. Interacts with ULK1 (phosphorylated form), GABARAP, GABARAPL1, GABARAPL2, MAP1LC3A, MAP1LC3C and BECN1. In terms of processing, degraded in a proteasome-independent fashion in the absence of viral infection but in a proteasome-dependent fashion following exposure to restriction sensitive virus. Autoubiquitinated in a RING finger- and UBE2D2-dependent manner. Monoubiquitinated by TRIM21. Deubiquitinated by Yersinia YopJ. Ubiquitination may not lead to proteasomal degradation.

It localises to the cytoplasm. It is found in the nucleus. The enzyme catalyses S-ubiquitinyl-[E2 ubiquitin-conjugating enzyme]-L-cysteine + [acceptor protein]-L-lysine = [E2 ubiquitin-conjugating enzyme]-L-cysteine + N(6)-ubiquitinyl-[acceptor protein]-L-lysine.. It functions in the pathway protein modification; protein ubiquitination. Functionally, capsid-specific restriction factor that prevents infection from non-host-adapted retroviruses. Blocks viral replication early in the life cycle, after viral entry but before reverse transcription. In addition to acting as a capsid-specific restriction factor, also acts as a pattern recognition receptor that activates innate immune signaling in response to the retroviral capsid lattice. Binding to the viral capsid triggers its E3 ubiquitin ligase activity, and in concert with the heterodimeric ubiquitin conjugating enzyme complex UBE2V1-UBE2N (also known as UBC13-UEV1A complex) generates 'Lys-63'-linked polyubiquitin chains, which in turn are catalysts in the autophosphorylation of the MAP3K7/TAK1 complex (includes TAK1, TAB2, and TAB3). Activation of the MAP3K7/TAK1 complex by autophosphorylation results in the induction and expression of NF-kappa-B and MAPK-responsive inflammatory genes, thereby leading to an innate immune response in the infected cell. Plays a role in regulating autophagy through activation of autophagy regulator BECN1 by causing its dissociation from its inhibitors BCL2 and TAB2. The sequence is that of Tripartite motif-containing protein 5 (TRIM5) from Gorilla gorilla gorilla (Western lowland gorilla).